The chain runs to 51 residues: Bacteriocin aureocin A53 (51 aa).

Met1 bears the N-formylmethionine mark.

It localises to the secreted. Functionally, antibacterial peptide active against a broad range of lactic acid bacteria, L.monocytogenes and many epidemiologically unrelated strains of S.aureus involved in bovine mastitis. This Staphylococcus aureus protein is Bacteriocin aureocin A53 (aucA).